Reading from the N-terminus, the 647-residue chain is LIM domain kinase 1 (647 aa).

LIM zinc-binding domains are found at residues 25–75 (CASC…CKKD) and 84–137 (CHGC…CGQC). The PDZ domain occupies 165–258 (LVSIPASAHG…LLQLTLEHDP (94 aa)). Position 210 is a phosphoserine (Ser-210). At Thr-229 the chain carries Phosphothreonine. Residues 256–319 (HDPHDSLGHG…SPASQRKDLG (64 aa)) are disordered. A compositionally biased stretch (low complexity) spans 266–277 (PVSDPSPLSSPV). Polar residues-rich tracts occupy residues 278 to 289 (HTPSGQAASSAR) and 298 to 313 (SIDTSPGTSSLASPAS). Ser-298, Ser-302, Ser-307, and Ser-310 each carry phosphoserine. Ser-323 carries the phosphoserine; by MAPKAPK2 modification. Phosphoserine is present on Ser-337. Residues 339 to 604 (LIHGEVLGKG…PSFVKLEQWL (266 aa)) form the Protein kinase domain. ATP is bound by residues 345–353 (LGKGCFGQA) and Lys-368. The active site involves Asp-460. A Phosphothreonine; by ROCK1 modification is found at Thr-508.

Belongs to the protein kinase superfamily. TKL Ser/Thr protein kinase family. Self-associates to form homodimers. Interacts with HSP90AA1; this interaction promotes LIMK1 dimerization and subsequent transphosphorylation. Interacts with CDKN1C. Interacts (via LIM domain) with the cytoplasmic domain of NRG1. Interacts with NISCH. Interacts with SSH1. Interacts with RLIM and RNF6. Interacts (via LIM zinc-binding domains) with FAM89B/LRAP25 (via LRR repeat). Forms a tripartite complex with CDC42BPA, CDC42BPB and FAM89B/LRAP25. In terms of processing, autophosphorylated. Phosphorylated on Thr-508 by ROCK1 and PAK1, resulting in activation. Phosphorylated by PAK4 which increases the ability of LIMK1 to phosphorylate cofilin. Phosphorylated at Ser-323 by MAPKAPK2 during activation of VEGFA-induced signaling, which results in activation of LIMK1 and promotion of actin reorganization, cell migration, and tubule formation of endothelial cells. Dephosphorylated and inactivated by SSH1. Phosphorylated by CDC42BP. Ubiquitinated. 'Lys-48'-linked polyubiquitination by RNF6 leads to proteasomal degradation through the 26S proteasome, modulating LIMK1 levels in the growth cone and its effect on axonal outgrowth. Also polyubiquitinated by RLIM. Highest expression in the nervous system, particularly in the spinal cord and the cranial nerve and dorsal root ganglia.

The protein resides in the cytoplasm. Its subcellular location is the nucleus. It localises to the cytoskeleton. The protein localises to the cell projection. It is found in the lamellipodium. It catalyses the reaction L-seryl-[protein] + ATP = O-phospho-L-seryl-[protein] + ADP + H(+). The enzyme catalyses L-threonyl-[protein] + ATP = O-phospho-L-threonyl-[protein] + ADP + H(+). Functionally, serine/threonine-protein kinase that plays an essential role in the regulation of actin filament dynamics. Acts downstream of several Rho family GTPase signal transduction pathways. Activated by upstream kinases including ROCK1, PAK1 and PAK4, which phosphorylate LIMK1 on a threonine residue located in its activation loop. LIMK1 subsequently phosphorylates and inactivates the actin binding/depolymerizing factors cofilin-1/CFL1, cofilin-2/CFL2 and destrin/DSTN, thereby preventing the cleavage of filamentous actin (F-actin), and stabilizing the actin cytoskeleton. In this way LIMK1 regulates several actin-dependent biological processes including cell motility, cell cycle progression, and differentiation. Phosphorylates TPPP on serine residues, thereby promoting microtubule disassembly. Stimulates axonal outgrowth and may be involved in brain development. In Mus musculus (Mouse), this protein is LIM domain kinase 1 (Limk1).